Here is a 375-residue protein sequence, read N- to C-terminus: Probable cytochrome c oxidase subunit 2 (375 aa).

Helical transmembrane passes span 36–56 (LAVS…DNVW), 80–100 (IIAA…TVVF), and 122–142 (LTYT…TVVV). The Cu cation site is built by H264, C305, C309, and H313. Polar residues predominate over residues 353 to 363 (VATSTRPFNTD). Residues 353–375 (VATSTRPFNTDRTVKSAAAPEAE) form a disordered region.

Belongs to the cytochrome c oxidase subunit 2 family. The cofactor is Cu cation. Heme is required as a cofactor.

It localises to the cell membrane. It carries out the reaction 4 Fe(II)-[cytochrome c] + O2 + 8 H(+)(in) = 4 Fe(III)-[cytochrome c] + 2 H2O + 4 H(+)(out). Its function is as follows. Subunits I and II form the functional core of the enzyme complex. Electrons originating in cytochrome c are transferred via heme a and Cu(A) to the binuclear center formed by heme a3 and Cu(B). This chain is Probable cytochrome c oxidase subunit 2 (ctaC), found in Nocardia farcinica (strain IFM 10152).